A 196-amino-acid chain; its full sequence is Glycerol-3-phosphate acyltransferase (196 aa).

Helical transmembrane passes span 4-24 (IYIA…GLIL), 70-90 (VLIA…LGAF), 111-131 (IGVL…LWLA), and 152-172 (IFLW…LTLL).

Belongs to the PlsY family. In terms of assembly, probably interacts with PlsX.

Its subcellular location is the cell inner membrane. It catalyses the reaction an acyl phosphate + sn-glycerol 3-phosphate = a 1-acyl-sn-glycero-3-phosphate + phosphate. It functions in the pathway lipid metabolism; phospholipid metabolism. Functionally, catalyzes the transfer of an acyl group from acyl-phosphate (acyl-PO(4)) to glycerol-3-phosphate (G3P) to form lysophosphatidic acid (LPA). This enzyme utilizes acyl-phosphate as fatty acyl donor, but not acyl-CoA or acyl-ACP. In Rhodopseudomonas palustris (strain BisB5), this protein is Glycerol-3-phosphate acyltransferase.